The primary structure comprises 165 residues: Cyanate hydratase (165 aa).

Catalysis depends on residues Arg106, Glu109, and Ser132.

Belongs to the cyanase family.

The catalysed reaction is cyanate + hydrogencarbonate + 3 H(+) = NH4(+) + 2 CO2. Catalyzes the reaction of cyanate with bicarbonate to produce ammonia and carbon dioxide. The protein is Cyanate hydratase of Laccaria bicolor (strain S238N-H82 / ATCC MYA-4686) (Bicoloured deceiver).